Here is a 146-residue protein sequence, read N- to C-terminus: Ribosome maturation factor RimP (146 aa).

This sequence belongs to the RimP family.

The protein resides in the cytoplasm. Required for maturation of 30S ribosomal subunits. This Helicobacter pylori (strain HPAG1) protein is Ribosome maturation factor RimP.